Reading from the N-terminus, the 215-residue chain is Large ribosomal subunit protein bL25 (215 aa).

Residues 174–215 (ETVVTVQPPATEKEEETEAAVTDSEPEVINEKEEPAEEAKEE) form a disordered region. The segment covering 186 to 215 (KEEETEAAVTDSEPEVINEKEEPAEEAKEE) has biased composition (acidic residues).

The protein belongs to the bacterial ribosomal protein bL25 family. CTC subfamily. As to quaternary structure, part of the 50S ribosomal subunit; part of the 5S rRNA/L5/L18/L25 subcomplex. Contacts the 5S rRNA. Binds to the 5S rRNA independently of L5 and L18.

Its function is as follows. This is one of the proteins that binds to the 5S RNA in the ribosome where it forms part of the central protuberance. This chain is Large ribosomal subunit protein bL25, found in Halalkalibacterium halodurans (strain ATCC BAA-125 / DSM 18197 / FERM 7344 / JCM 9153 / C-125) (Bacillus halodurans).